We begin with the raw amino-acid sequence, 196 residues long: Pyroglutamyl-peptidase 1-like protein (196 aa).

Active-site residues include glutamate 65, cysteine 127, and histidine 146.

This sequence belongs to the peptidase C15 family.

In Homo sapiens (Human), this protein is Pyroglutamyl-peptidase 1-like protein (PGPEP1L).